We begin with the raw amino-acid sequence, 484 residues long: tRNA-2-methylthio-N(6)-dimethylallyladenosine synthase (484 aa).

Positions 36–153 constitute an MTTase N-terminal domain; sequence GKLYIKTHGC…LPELIRARRE (118 aa). Residues cysteine 45, cysteine 82, cysteine 116, cysteine 190, cysteine 194, and cysteine 197 each contribute to the [4Fe-4S] cluster site. The Radical SAM core domain maps to 176–415; it reads RAEGPSAFVS…HINAHAASIS (240 aa). The TRAM domain maps to 416–479; sequence QSMVGSVQRV…SNSLRGRIQL (64 aa). Residues 428–450 are disordered; that stretch reads EGPSRRDPNELTGKSENMRPVNF.

Belongs to the methylthiotransferase family. MiaB subfamily. Monomer. The cofactor is [4Fe-4S] cluster.

Its subcellular location is the cytoplasm. It carries out the reaction N(6)-dimethylallyladenosine(37) in tRNA + (sulfur carrier)-SH + AH2 + 2 S-adenosyl-L-methionine = 2-methylsulfanyl-N(6)-dimethylallyladenosine(37) in tRNA + (sulfur carrier)-H + 5'-deoxyadenosine + L-methionine + A + S-adenosyl-L-homocysteine + 2 H(+). In terms of biological role, catalyzes the methylthiolation of N6-(dimethylallyl)adenosine (i(6)A), leading to the formation of 2-methylthio-N6-(dimethylallyl)adenosine (ms(2)i(6)A) at position 37 in tRNAs that read codons beginning with uridine. In Xanthomonas euvesicatoria pv. vesicatoria (strain 85-10) (Xanthomonas campestris pv. vesicatoria), this protein is tRNA-2-methylthio-N(6)-dimethylallyladenosine synthase.